A 197-amino-acid chain; its full sequence is Inosine triphosphate pyrophosphatase (197 aa).

An ITP-binding site is contributed by 10 to 15; it reads TGNANK. Glu-45 is a Mg(2+) binding site. Residues Lys-58, 76–77, Lys-93, 151–154, Lys-175, and 180–181 each bind ITP; these read DT, FGWD, and HR.

Belongs to the HAM1 NTPase family. As to quaternary structure, homodimer. Requires Mg(2+) as cofactor. Mn(2+) is required as a cofactor.

The protein resides in the cytoplasm. The protein localises to the nucleus. It catalyses the reaction ITP + H2O = IMP + diphosphate + H(+). The enzyme catalyses dITP + H2O = dIMP + diphosphate + H(+). It carries out the reaction XTP + H2O = XMP + diphosphate + H(+). The catalysed reaction is N(6)-hydroxy-dATP + H2O = N(6)-hydroxy-dAMP + diphosphate + H(+). In terms of biological role, pyrophosphatase that hydrolyzes the non-canonical purine nucleotides inosine triphosphate (ITP), deoxyinosine triphosphate (dITP) as well as 2'-deoxy-N-6-hydroxylaminopurine triphosphate (dHAPTP) and 5-bromodeoxyuridine 5'-triphosphate (BrdUTP) to their respective monophosphate derivatives. Xanthosine 5'-triphosphate (XTP) is also a potential substrate. The enzyme does not distinguish between the deoxy- and ribose forms. Probably excludes non-canonical purines from RNA and DNA precursor pools, thus preventing their incorporation into RNA and DNA and avoiding chromosomal lesions. The sequence is that of Inosine triphosphate pyrophosphatase from Saccharomyces cerevisiae (strain ATCC 204508 / S288c) (Baker's yeast).